The primary structure comprises 361 residues: tRNA/tmRNA (uracil-C(5))-methyltransferase (361 aa).

5 residues coordinate S-adenosyl-L-methionine: Gln183, Tyr211, Asn216, Glu232, and Asp294. The Nucleophile role is filled by Cys319. Residue Glu353 is the Proton acceptor of the active site.

It belongs to the class I-like SAM-binding methyltransferase superfamily. RNA M5U methyltransferase family. TrmA subfamily.

It carries out the reaction uridine(54) in tRNA + S-adenosyl-L-methionine = 5-methyluridine(54) in tRNA + S-adenosyl-L-homocysteine + H(+). The enzyme catalyses uridine(341) in tmRNA + S-adenosyl-L-methionine = 5-methyluridine(341) in tmRNA + S-adenosyl-L-homocysteine + H(+). In terms of biological role, dual-specificity methyltransferase that catalyzes the formation of 5-methyluridine at position 54 (m5U54) in all tRNAs, and that of position 341 (m5U341) in tmRNA (transfer-mRNA). This is tRNA/tmRNA (uracil-C(5))-methyltransferase from Acinetobacter baumannii (strain AB307-0294).